The chain runs to 364 residues: DNA replication and repair protein RecF (364 aa).

30 to 37 (GNNGMGKT) provides a ligand contact to ATP.

It belongs to the RecF family.

Its subcellular location is the cytoplasm. Functionally, the RecF protein is involved in DNA metabolism; it is required for DNA replication and normal SOS inducibility. RecF binds preferentially to single-stranded, linear DNA. It also seems to bind ATP. The protein is DNA replication and repair protein RecF of Porphyromonas gingivalis (strain ATCC BAA-308 / W83).